We begin with the raw amino-acid sequence, 448 residues long: TRAF family member-associated NF-kappa-B activator (448 aa).

A necessary for interaction with ZC3H12A region spans residues 35–65 (MDKNIGEQLNRAYEAFRQACMDRDSAVRELQ). The stretch at 60–98 (AVRELQQKQTENYEQRIREQQEQLSFQQNLIDRLKSQLL) forms a coiled coil. A necessary for interaction with TRAF6 region spans residues 105–224 (DNSYGYVPLL…QCTDKTEKQE (120 aa)). Residues 166–205 (HERDNIEKTFWDLKEEFHRICLLAKAQKDHLSKLNIPDIA) are interaction with TBK1 and IKBKE. Positions 205-224 (ATDTQCSVPIQCTDKTEKQE) are TRAF family member interaction. S211 bears the Phosphoserine mark. The residue at position 246 (T246) is a Phosphothreonine. 4 positions are modified to phosphoserine: S258, S261, S377, and S380. Residues 416–443 (PLVCEFCQELFPPSITSRGDFLRHLNTH) form a UBZ1-type zinc finger. Zn(2+)-binding residues include C419, C422, H439, and H443.

Homodimer. Found in a deubiquitination complex with TANK, USP10 and ZC3H12A; this complex inhibits genotoxic stress- or interleukin-1-beta-mediated NF-kappaB activation by promoting IKBKG or TRAF6 deubiquitination. Interacts with IKBKG; this interaction increases in response to DNA damage. Interacts with TRAF6; this interaction increases in response to DNA damage and recruits USP10 to the ubiquitinated TRAF6. Interacts with USP10; this interaction increases in response to DNA damage. Interacts with TBK1 and IKBKE. Also interacts with TRAF1, TRAF2, and TRAF3 by binding to their TRAF-C domains; the interaction with TRAF2 is disrupted by the phosphorylation of TANK by IKBKE. Interacts more strongly with TRAF1 and TRAF2 than TRAF3. Part of a ternary complex consisting of TANK, IKBKB and IKBKG. Interacts with IKBKG; the interaction is enhanced by IKBKE and TBK1. Heart, brain, spleen, lung, liver, skeletal muscle, kidney and testis.

Its subcellular location is the cytoplasm. Adapter protein involved in I-kappa-B-kinase (IKK) regulation which constitutively binds TBK1 and IKBKE playing a role in antiviral innate immunity. Acts as a regulator of TRAF function by maintaining them in a latent state. Blocks TRAF2 binding to LMP1 and inhibits LMP1-mediated NF-kappa-B activation. Negatively regulates NF-kappaB signaling and cell survival upon DNA damage. Plays a role as an adapter to assemble ZC3H12A, USP10 in a deubiquitination complex which plays a negative feedback response to attenuate NF-kappaB activation through the deubiquitination of IKBKG or TRAF6 in response to interleukin-1-beta (IL1B) stimulation or upon DNA damage. Promotes UBP10-induced deubiquitination of TRAF6 in response to DNA damage. May control negatively TRAF2-mediated NF-kappa-B activation signaled by CD40, TNFR1 and TNFR2. Essential for the efficient induction of IRF-dependent transcription following infection with Sendai virus. In Mus musculus (Mouse), this protein is TRAF family member-associated NF-kappa-B activator (Tank).